A 153-amino-acid polypeptide reads, in one-letter code: NAD(P)H-quinone oxidoreductase subunit N (153 aa).

Belongs to the complex I NdhN subunit family. NDH-1 can be composed of about 15 different subunits; different subcomplexes with different compositions have been identified which probably have different functions.

It is found in the cellular thylakoid membrane. The catalysed reaction is a plastoquinone + NADH + (n+1) H(+)(in) = a plastoquinol + NAD(+) + n H(+)(out). It carries out the reaction a plastoquinone + NADPH + (n+1) H(+)(in) = a plastoquinol + NADP(+) + n H(+)(out). Functionally, NDH-1 shuttles electrons from an unknown electron donor, via FMN and iron-sulfur (Fe-S) centers, to quinones in the respiratory and/or the photosynthetic chain. The immediate electron acceptor for the enzyme in this species is believed to be plastoquinone. Couples the redox reaction to proton translocation, and thus conserves the redox energy in a proton gradient. Cyanobacterial NDH-1 also plays a role in inorganic carbon-concentration. The protein is NAD(P)H-quinone oxidoreductase subunit N of Parasynechococcus marenigrum (strain WH8102).